A 456-amino-acid chain; its full sequence is UDP-N-acetylmuramoylalanine--D-glutamate ligase (456 aa).

119–125 (GSNGKTT) contributes to the ATP binding site.

It belongs to the MurCDEF family.

Its subcellular location is the cytoplasm. The catalysed reaction is UDP-N-acetyl-alpha-D-muramoyl-L-alanine + D-glutamate + ATP = UDP-N-acetyl-alpha-D-muramoyl-L-alanyl-D-glutamate + ADP + phosphate + H(+). The protein operates within cell wall biogenesis; peptidoglycan biosynthesis. Its function is as follows. Cell wall formation. Catalyzes the addition of glutamate to the nucleotide precursor UDP-N-acetylmuramoyl-L-alanine (UMA). In Limosilactobacillus reuteri (strain DSM 20016) (Lactobacillus reuteri), this protein is UDP-N-acetylmuramoylalanine--D-glutamate ligase.